A 521-amino-acid chain; its full sequence is Ribonuclease Y (521 aa).

A helical transmembrane segment spans residues 10–30 (LIITAGVSIALAIVAFFLGYL). A KH domain is found at 210-270 (TVSVVTLPND…IRREIAKLTL (61 aa)). The HD domain occupies 336 to 430 (VLAHSIEVAN…IQAADSVSAA (95 aa)).

This sequence belongs to the RNase Y family.

It is found in the cell membrane. Its function is as follows. Endoribonuclease that initiates mRNA decay. This Caldicellulosiruptor saccharolyticus (strain ATCC 43494 / DSM 8903 / Tp8T 6331) protein is Ribonuclease Y.